Here is a 1500-residue protein sequence, read N- to C-terminus: Secreted chitinase LysM12 (1500 aa).

The first 23 residues, 1-23, serve as a signal peptide directing secretion; that stretch reads MAPLWNGMAAGLLLSAAVVSGQA. N-linked (GlcNAc...) asparagine glycosylation is found at Asn53, Asn225, Asn251, and Asn270. 2 consecutive LysM domains span residues 303–348 and 367–415; these read RTQK…HVCC and ATTT…VICI. In terms of domain architecture, Chitin-binding type-1 spans 428–496; that stretch reads DAECGPQVPG…TNGCISHCGM (69 aa). Disulfide bonds link Cys431–Cys459, Cys453–Cys465, Cys458–Cys472, and Cys490–Cys494. The 373-residue stretch at 507–879 folds into the GH18 domain; it reads FRSVGYYESY…PGMILQMKSG (373 aa). Residue Glu625 is the Proton donor of the active site. Position 626 (Tyr626) interacts with chitin. N-linked (GlcNAc...) asparagine glycosylation is found at Asn721 and Asn800. Trp852 lines the chitin pocket. Asn892 and Asn983 each carry an N-linked (GlcNAc...) asparagine glycan. Positions 1164–1193 are disordered; sequence IPKDIPYPDKTKRKDKDDDDNKKTEATDSE. Over residues 1169–1193 the composition is skewed to basic and acidic residues; it reads PYPDKTKRKDKDDDDNKKTEATDSE.

This sequence belongs to the glycosyl hydrolase 18 family. Chitinase class V subfamily.

Its subcellular location is the secreted. The enzyme catalyses Random endo-hydrolysis of N-acetyl-beta-D-glucosaminide (1-&gt;4)-beta-linkages in chitin and chitodextrins.. Functionally, secreted chitinase involved in the degradation of chitin, a component of the cell walls of fungi and exoskeletal elements of some animals (including worms and arthropods). Involved in pathogenesis via manipulation of host defenses for successful infection. The chain is Secreted chitinase LysM12 from Penicillium expansum (Blue mold rot fungus).